The sequence spans 395 residues: Capsid protein (395 aa).

The segment covering 1 to 41 (MARKYAKRSKSRPRTARRSPKSRSRPRSRAPRRKAPSRPRI) has biased composition (basic residues). The disordered stretch occupies residues 1–51 (MARKYAKRSKSRPRTARRSPKSRSRPRSRAPRRKAPSRPRIQRVNPVRRPM). Positions 2–9 (ARKYAKRS) match the Nuclear localization signal motif.

It is found in the host nucleus. The protein resides in the virion. Self-assembles to form the virion icosahedral capsid. This chain is Capsid protein, found in Chaetoceros setoense (Chaetoceros setoense DNA virus).